We begin with the raw amino-acid sequence, 310 residues long: MVKVYAPASSANMSVGFDVLGAAVTPVDGALLGDVVTVEAAETFSLNNLGRFADKLPSEPRENIVYQCWERFCQELGKQIPVAMTLEKNMPIGSGLGSSACSVVAALMAMNEHCGKPLNDTRLLALMGELEGRISGSIHYDNVAPCFLGGMQLMIEENDIISQQVPGFDEWLWVLAYPGIKVSTAEARAILPAQYRRQDCIAHGRHLAGFIHACYSRQLELAAKLMKDVIAEPYRERLLPGFRQARQAVAEIGAVASGISGSGPTLFALCDKPDTAQRVADWLGKNYLQNQEGFVHICRLDTAGARVLEN.

91–101 contacts ATP; that stretch reads PIGSGLGSSAC.

The protein belongs to the GHMP kinase family. Homoserine kinase subfamily.

It is found in the cytoplasm. The catalysed reaction is L-homoserine + ATP = O-phospho-L-homoserine + ADP + H(+). Its pathway is amino-acid biosynthesis; L-threonine biosynthesis; L-threonine from L-aspartate: step 4/5. Its function is as follows. Catalyzes the ATP-dependent phosphorylation of L-homoserine to L-homoserine phosphate. This chain is Homoserine kinase, found in Escherichia coli O6:K15:H31 (strain 536 / UPEC).